The following is a 303-amino-acid chain: Serine/threonine-protein phosphatase 6 catalytic subunit (303 aa).

Residues aspartate 51, histidine 53, aspartate 79, and asparagine 111 each coordinate Mn(2+). Histidine 112 serves as the catalytic Proton donor. Mn(2+) contacts are provided by histidine 161 and histidine 235.

This sequence belongs to the PPP phosphatase family. PP-6 (PP-V) subfamily. The cofactor is Mn(2+).

The protein resides in the cytoplasm. The catalysed reaction is O-phospho-L-seryl-[protein] + H2O = L-seryl-[protein] + phosphate. The enzyme catalyses O-phospho-L-threonyl-[protein] + H2O = L-threonyl-[protein] + phosphate. Its function is as follows. May be involved in controlling cellularization or in regulating transcription of the genes involved in this process. The protein is Serine/threonine-protein phosphatase 6 catalytic subunit (PpV) of Drosophila melanogaster (Fruit fly).